The chain runs to 566 residues: Mitochondrial distribution and morphology protein 34 (566 aa).

Residues 1–195 (MAFNFNWSPL…LPAIIHRLSL (195 aa)) enclose the SMP-LTD domain. Disordered stretches follow at residues 212 to 237 (PEQT…DSLG), 349 to 401 (GYGL…NPSV), 432 to 518 (PERR…SSST), and 539 to 566 (KLMP…AYGQ). Basic residues predominate over residues 358 to 370 (RHSKAHSRKRKKR). The segment covering 380 to 401 (TSDTASVSDESAYTETASNPSV) has biased composition (polar residues). The span at 444 to 454 (PRRDIATEMLR) shows a compositional bias: basic and acidic residues.

It belongs to the MDM34 family. In terms of assembly, component of the ER-mitochondria encounter structure (ERMES) or MDM complex, composed of mmm1, mdm10, mdm12 and mdm34.

Its subcellular location is the mitochondrion outer membrane. Functionally, component of the ERMES/MDM complex, which serves as a molecular tether to connect the endoplasmic reticulum (ER) and mitochondria. Components of this complex are involved in the control of mitochondrial shape and protein biogenesis, and function in nonvesicular lipid trafficking between the ER and mitochondria. Mdm34 is required for the interaction of the ER-resident membrane protein mmm1 and the outer mitochondrial membrane-resident beta-barrel protein mdm10. The polypeptide is Mitochondrial distribution and morphology protein 34 (Aspergillus flavus (strain ATCC 200026 / FGSC A1120 / IAM 13836 / NRRL 3357 / JCM 12722 / SRRC 167)).